Reading from the N-terminus, the 445-residue chain is Histone acetyltransferase of the MYST family 2 (445 aa).

A compositionally biased stretch (polar residues) spans 1–23 (MGSSANTETNGNAPPPSSNQKPP). The interval 1–58 (MGSSANTETNGNAPPPSSNQKPPATNGVDGSHPPPPPLTPDQAIIESDPSKKRKMGML) is disordered. The Tudor-knot domain occupies 60 to 118 (LEVGTRVMCRWRDGKHHPVKVIERRRIHNGGQNDYEYYVHYTEFNRRLDEWTQLDQLDL). One can recognise an MYST-type HAT domain in the interval 169–440 (TKVKNISTIE…VDASKLIWTP (272 aa)). Residues 202–227 (LFFCEFCLNFMKRKEQLQRHMRKCDL) form a C2HC MYST-type zinc finger. Position 269 is an N6-acetyllysine; by autocatalysis (K269). Residues 312 to 314 (ILT) and 319 to 325 (QRKGYGK) contribute to the acetyl-CoA site. E345 functions as the Proton donor/acceptor in the catalytic mechanism. Position 349 (S349) interacts with acetyl-CoA.

Belongs to the MYST (SAS/MOZ) family. As to quaternary structure, interacts with MRG1 and MRG2. Post-translationally, autoacetylation at Lys-269 is required for proper function. As to expression, expressed in cotyledons, leaves, stems, roots and, at higher levels in developing flowers, particularly in the anthers and gynoecia. Constitutively expressed in all tissues, predominantly in shoot apical meristem.

Its subcellular location is the nucleus. It catalyses the reaction L-lysyl-[protein] + acetyl-CoA = N(6)-acetyl-L-lysyl-[protein] + CoA + H(+). Functionally, histone acetyltransferase which may be involved in transcriptional activation. Acetylates 'Lys-5' of histone H4 (H4K5ac). Essential for gametophyte development. Negative regulator of flowering controlling the H4K5ac levels in the FLC chromatin. This chain is Histone acetyltransferase of the MYST family 2, found in Arabidopsis thaliana (Mouse-ear cress).